The chain runs to 301 residues: Putative S-adenosyl-L-methionine-dependent methyltransferase MMAR_4850 (301 aa).

S-adenosyl-L-methionine-binding positions include D127 and 156–157 (DL).

This sequence belongs to the UPF0677 family.

In terms of biological role, exhibits S-adenosyl-L-methionine-dependent methyltransferase activity. The sequence is that of Putative S-adenosyl-L-methionine-dependent methyltransferase MMAR_4850 from Mycobacterium marinum (strain ATCC BAA-535 / M).